The sequence spans 161 residues: Disulfide bond formation protein B (161 aa).

Over 1–8 (MQANSRAY) the chain is Cytoplasmic. Residues 9–25 (FLLIAFISFGLVGFALY) traverse the membrane as a helical segment. At 26 to 43 (LQFEKGYQPCPLCIMQRF) the chain is on the periplasmic side. A disulfide bridge links Cys-35 with Cys-38. A helical transmembrane segment spans residues 44–58 (AFIGIGLFSLLAVIA). Residues 59–63 (QNTRS) are Cytoplasmic-facing. Residues 64–81 (LWQGLGMLSGVGGIAVAV) traverse the membrane as a helical segment. Topologically, residues 82 to 136 (YHVSLLLNPKASCGIDPLENWVNALPTAKVLPQVFYSDGLCTAPLPPVLGLSVPA) are periplasmic. Cysteines 94 and 122 form a disulfide. Residues 137-155 (WSLIWLFILTLTLAVGLIR) traverse the membrane as a helical segment. Residues 156-161 (REKNFR) are Cytoplasmic-facing.

Belongs to the DsbB family.

The protein localises to the cell inner membrane. In terms of biological role, required for disulfide bond formation in some periplasmic proteins. Acts by oxidizing the DsbA protein. The chain is Disulfide bond formation protein B from Cupriavidus pinatubonensis (strain JMP 134 / LMG 1197) (Cupriavidus necator (strain JMP 134)).